The following is a 308-amino-acid chain: Bifunctional protein FolD (308 aa).

170-172 (GKG) is an NADP(+) binding site.

It belongs to the tetrahydrofolate dehydrogenase/cyclohydrolase family. Homodimer.

It carries out the reaction (6R)-5,10-methylene-5,6,7,8-tetrahydrofolate + NADP(+) = (6R)-5,10-methenyltetrahydrofolate + NADPH. It catalyses the reaction (6R)-5,10-methenyltetrahydrofolate + H2O = (6R)-10-formyltetrahydrofolate + H(+). Its pathway is one-carbon metabolism; tetrahydrofolate interconversion. Functionally, catalyzes the oxidation of 5,10-methylenetetrahydrofolate to 5,10-methenyltetrahydrofolate and then the hydrolysis of 5,10-methenyltetrahydrofolate to 10-formyltetrahydrofolate. This chain is Bifunctional protein FolD, found in Pyrobaculum calidifontis (strain DSM 21063 / JCM 11548 / VA1).